The sequence spans 101 residues: YcgL domain-containing protein ACIAD2309 (101 aa).

Residues 1-93 (MHCDIYRSSK…PPEGFINPSD (93 aa)) form the YcgL domain.

The sequence is that of YcgL domain-containing protein ACIAD2309 from Acinetobacter baylyi (strain ATCC 33305 / BD413 / ADP1).